Consider the following 168-residue polypeptide: Phosphopantetheine adenylyltransferase (168 aa).

Threonine 14 serves as a coordination point for substrate. ATP contacts are provided by residues 14–15 and histidine 22; that span reads TF. 3 residues coordinate substrate: lysine 46, leucine 78, and arginine 92. ATP-binding positions include 93–95, glutamate 103, and 128–134; these read GLR and YSFISSS.

It belongs to the bacterial CoaD family. As to quaternary structure, homohexamer. Mg(2+) serves as cofactor.

The protein localises to the cytoplasm. The catalysed reaction is (R)-4'-phosphopantetheine + ATP + H(+) = 3'-dephospho-CoA + diphosphate. The protein operates within cofactor biosynthesis; coenzyme A biosynthesis; CoA from (R)-pantothenate: step 4/5. Reversibly transfers an adenylyl group from ATP to 4'-phosphopantetheine, yielding dephospho-CoA (dPCoA) and pyrophosphate. The protein is Phosphopantetheine adenylyltransferase of Xanthomonas campestris pv. campestris (strain 8004).